A 205-amino-acid polypeptide reads, in one-letter code: Probable GTP-binding protein EngB (205 aa).

The region spanning 29-203 (QGAEIAFIGR…KAVLSQWFSS (175 aa)) is the EngB-type G domain. Residues 37–44 (GRSNAGKS), 64–68 (GRTQM), 82–85 (DLPG), 149–152 (TKSD), and 182–184 (FSS) contribute to the GTP site. Residues serine 44 and threonine 66 each coordinate Mg(2+).

The protein belongs to the TRAFAC class TrmE-Era-EngA-EngB-Septin-like GTPase superfamily. EngB GTPase family. Mg(2+) serves as cofactor.

In terms of biological role, necessary for normal cell division and for the maintenance of normal septation. This is Probable GTP-binding protein EngB from Coxiella burnetii (strain CbuK_Q154) (Coxiella burnetii (strain Q154)).